The primary structure comprises 293 residues: MTENNDIKMVIITGMSGAGKTVALQSFEDLGYFCVDNLPPMLLPKFIELMADSKGKMNKVALGIDLRGREFFEYLWGALDDLSERTWIIPHILFLDAKDSTLVTRYKETRRSHPLAPTGLPLKGIEAERGLLTDMKARANIVLDTSDLKPKELREKIVHLFSTETEQAFRVNVMSFGFKYGIPIDADLVFDVRFLPNPYYIPHMKPLTGLDEEVSSYVLKFNETHKFLEKLTDLITFMLPHYKREGKSQLVIAIGCTGGQHRSVTLTEYLGKHLKPEYSVHVSHRDVEKRKGH.

ATP is bound at residue 14–21; sequence GMSGAGKT. Residue 65-68 participates in GTP binding; it reads DLRG.

Belongs to the RapZ-like family.

Its function is as follows. Displays ATPase and GTPase activities. In Bacillus mycoides (strain KBAB4) (Bacillus weihenstephanensis), this protein is Nucleotide-binding protein BcerKBAB4_4948.